Here is a 488-residue protein sequence, read N- to C-terminus: Glutamyl-tRNA(Gln) amidotransferase subunit A (488 aa).

Residues Lys77 and Ser152 each act as charge relay system in the active site. The Acyl-ester intermediate role is filled by Ser176.

It belongs to the amidase family. GatA subfamily. As to quaternary structure, heterotrimer of A, B and C subunits.

It carries out the reaction L-glutamyl-tRNA(Gln) + L-glutamine + ATP + H2O = L-glutaminyl-tRNA(Gln) + L-glutamate + ADP + phosphate + H(+). In terms of biological role, allows the formation of correctly charged Gln-tRNA(Gln) through the transamidation of misacylated Glu-tRNA(Gln) in organisms which lack glutaminyl-tRNA synthetase. The reaction takes place in the presence of glutamine and ATP through an activated gamma-phospho-Glu-tRNA(Gln). This is Glutamyl-tRNA(Gln) amidotransferase subunit A from Streptococcus pyogenes serotype M5 (strain Manfredo).